The chain runs to 458 residues: Argininosuccinate lyase (458 aa).

The protein belongs to the lyase 1 family. Argininosuccinate lyase subfamily.

The protein localises to the cytoplasm. The enzyme catalyses 2-(N(omega)-L-arginino)succinate = fumarate + L-arginine. It participates in amino-acid biosynthesis; L-arginine biosynthesis; L-arginine from L-ornithine and carbamoyl phosphate: step 3/3. This chain is Argininosuccinate lyase, found in Neisseria meningitidis serogroup C (strain 053442).